We begin with the raw amino-acid sequence, 603 residues long: Thread biopolymer filament subunit gamma (603 aa).

A head region spans residues 1–191; that stretch reads MASHSSVSYR…ENETMEEELK (191 aa). An IF rod domain is found at 158–476; the sequence is VKNILGTLNQ…KLLEGQELMV (319 aa). Residues 193–227 form a coil 1A region; sequence LTGGVPMSPDSTVNLENVETQVTEMLTEVSNLTLE. The interval 228-240 is linker 1; that stretch reads RVRLEIDVDHLRA. The interval 241–341 is coil 1B; sequence TADEIKSKYE…DALNVMREEY (101 aa). A linker 12 region spans residues 342-362; it reads QQVVTKNVQEAETYCKMQIDQ. Residues 363-381 form a coil 2A region; it reads IQGISTQTTEQISILDKEI. The segment at 382-389 is linker 2; it reads NTLEKELQ. The coil 2B stretch occupies residues 390–510; the sequence is PLNVEYQRLL…SSVGYGASST (121 aa). The interval 511 to 603 is tail; that stretch reads TLGAISGGYS…GHDSTIILQQ (93 aa). The segment covering 562–587 has biased composition (low complexity); it reads SSSGGHSMYSSSSMKRSSSKSASASA. The disordered stretch occupies residues 562 to 603; the sequence is SSSGGHSMYSSSSMKRSSSKSASASAGGYGTSGHDSTIILQQ.

This sequence belongs to the intermediate filament family. In terms of assembly, coiled-coil heterodimer of an alpha and a gamma subunit. Assemble into 10 nm filaments. Forms a massive, conical, intermediate filament biopolymer of approximately 60 cm.

It is found in the secreted. Its subcellular location is the extracellular space. Its function is as follows. Released extracellularly into seawater and provides physical and biological defense against invasive organism by modulation of the viscoelastic properties of mucus. This chain is Thread biopolymer filament subunit gamma, found in Eptatretus stoutii (Pacific hagfish).